A 120-amino-acid polypeptide reads, in one-letter code: MTTPTTLKYAASHEWLSEDGTVGITDHAQEQLGDVVYVELPEVGREVTAGEAVAVVESVKTASDIYAPASGRIVAVNEELSGNPELVNSAPYEGGWLFKLEVTEEGSDLLDAAAYDAQAH.

In terms of domain architecture, Lipoyl-binding spans 19 to 101 (DGTVGITDHA…YEGGWLFKLE (83 aa)). Lysine 60 carries the post-translational modification N6-lipoyllysine.

This sequence belongs to the GcvH family. In terms of assembly, the glycine cleavage system is composed of four proteins: P, T, L and H. (R)-lipoate is required as a cofactor.

In terms of biological role, the glycine cleavage system catalyzes the degradation of glycine. The H protein shuttles the methylamine group of glycine from the P protein to the T protein. This Deinococcus deserti (strain DSM 17065 / CIP 109153 / LMG 22923 / VCD115) protein is Glycine cleavage system H protein.